A 509-amino-acid polypeptide reads, in one-letter code: Cytochrome P450 monooxygenase CYP512U6 (509 aa).

A helical transmembrane segment spans residues 12–29; it reads VFACVAVVIAIYAVRWYT. Position 446 (cysteine 446) interacts with heme.

Belongs to the cytochrome P450 family. Requires heme as cofactor.

It is found in the membrane. It catalyses the reaction ganoderate DM + reduced [NADPH--hemoprotein reductase] + O2 = hainanate A + oxidized [NADPH--hemoprotein reductase] + H2O + H(+). It carries out the reaction ganoderate TR + reduced [NADPH--hemoprotein reductase] + O2 = ganoderate Jc + oxidized [NADPH--hemoprotein reductase] + H2O + H(+). It functions in the pathway secondary metabolite biosynthesis; terpenoid biosynthesis. In terms of biological role, cytochrome P450 monooxygenase that hydroxylates the ganoderic acids DM and TR at the C-23 position to produce hainanic acid A and ganoderic acid Jc, respectively. This chain is Cytochrome P450 monooxygenase CYP512U6, found in Ganoderma lucidum (Ling zhi medicinal fungus).